The primary structure comprises 426 residues: Glutamate-1-semialdehyde 2,1-aminomutase (426 aa).

Position 265 is an N6-(pyridoxal phosphate)lysine (lysine 265).

Belongs to the class-III pyridoxal-phosphate-dependent aminotransferase family. HemL subfamily. Homodimer. Pyridoxal 5'-phosphate is required as a cofactor.

It is found in the cytoplasm. The catalysed reaction is (S)-4-amino-5-oxopentanoate = 5-aminolevulinate. Its pathway is porphyrin-containing compound metabolism; protoporphyrin-IX biosynthesis; 5-aminolevulinate from L-glutamyl-tRNA(Glu): step 2/2. In Alteromonas mediterranea (strain DSM 17117 / CIP 110805 / LMG 28347 / Deep ecotype), this protein is Glutamate-1-semialdehyde 2,1-aminomutase.